A 169-amino-acid chain; its full sequence is Putative esterase F42H10.6 (169 aa).

Belongs to the thioesterase paaI family.

This is Putative esterase F42H10.6 from Caenorhabditis elegans.